Here is a 325-residue protein sequence, read N- to C-terminus: Cytochrome c biogenesis protein CcsA (325 aa).

8 helical membrane passes run 12 to 32 (HISF…LLFV), 45 to 65 (GMII…VFSG), 72 to 92 (LYES…VPYF), 100 to 120 (LNTI…SGLL), 145 to 165 (MILG…ILVI), 231 to 251 (TISL…VWAN), 264 to 281 (ETWA…LHTR), and 293 to 313 (IVAS…NLLG).

Belongs to the CcmF/CycK/Ccl1/NrfE/CcsA family. As to quaternary structure, may interact with Ccs1.

It is found in the plastid. The protein resides in the chloroplast thylakoid membrane. Required during biogenesis of c-type cytochromes (cytochrome c6 and cytochrome f) at the step of heme attachment. The sequence is that of Cytochrome c biogenesis protein CcsA from Glycine max (Soybean).